The chain runs to 89 residues: Small ribosomal subunit protein bS20 (89 aa).

The disordered stretch occupies residues 1-22 (MANTASARKRIRQNERRRERNV). Residues 12–22 (RQNERRRERNV) are compositionally biased toward basic and acidic residues.

The protein belongs to the bacterial ribosomal protein bS20 family.

Its function is as follows. Binds directly to 16S ribosomal RNA. The polypeptide is Small ribosomal subunit protein bS20 (Gluconobacter oxydans (strain 621H) (Gluconobacter suboxydans)).